The chain runs to 158 residues: MNRICHIEIDQTSPIPPTAEIEQERQVAIFDLLEENSFALPAREGRAPAEGPFRLTLAIREGRLVFDIRSEEEETVGEFHLSLGPFRQVVKDYFQICESYFEAVKRLPPSQIEAIDMARRGIHNEGARVLKERLEGKAEVDIDTARRLFTLICVLHWG.

It belongs to the UPF0262 family.

The protein is UPF0262 protein RHOS4_22360 of Cereibacter sphaeroides (strain ATCC 17023 / DSM 158 / JCM 6121 / CCUG 31486 / LMG 2827 / NBRC 12203 / NCIMB 8253 / ATH 2.4.1.) (Rhodobacter sphaeroides).